A 92-amino-acid chain; its full sequence is Small ribosomal subunit protein uS19 (92 aa).

It belongs to the universal ribosomal protein uS19 family.

In terms of biological role, protein S19 forms a complex with S13 that binds strongly to the 16S ribosomal RNA. This Nostoc sp. (strain PCC 7120 / SAG 25.82 / UTEX 2576) protein is Small ribosomal subunit protein uS19.